An 848-amino-acid chain; its full sequence is Protein SEY1 (848 aa).

Residues 1–733 (MNGNFAAVGS…KRGALGGMTQ (733 aa)) lie on the Cytoplasmic side of the membrane. The GB1/RHD3-type G domain occupies 47 to 277 (GFNYHLISVF…FVGGVFLPEY (231 aa)). Residue 57–64 (GSQSTGKS) coordinates GTP. A helical membrane pass occupies residues 734–754 (VPLYFWIALFAFGWNEIWMVI). Residues 755-757 (RNP) lie on the Lumenal side of the membrane. The helical transmembrane segment at 758–778 (FLFILLLLSAGGTYVAYNLSL) threads the bilayer. Topologically, residues 779-848 (LGPMMQMTNA…KKKDYDDDGI (70 aa)) are cytoplasmic. The interval 815–848 (LAMPASSKSSGGEQVRMDTLDSKGKKKDYDDDGI) is disordered. Positions 829–848 (VRMDTLDSKGKKKDYDDDGI) are enriched in basic and acidic residues.

It belongs to the TRAFAC class dynamin-like GTPase superfamily. GB1/RHD3 GTPase family. RHD3 subfamily.

It localises to the endoplasmic reticulum membrane. Cooperates with the reticulon proteins and tubule-shaping DP1 family proteins to generate and maintain the structure of the tubular endoplasmic reticulum network. Has GTPase activity, which is required for its function in ER organization. This is Protein SEY1 from Pyricularia oryzae (strain 70-15 / ATCC MYA-4617 / FGSC 8958) (Rice blast fungus).